The following is a 205-amino-acid chain: Holliday junction branch migration complex subunit RuvA (205 aa).

Positions 1-63 (MIGMLRGHVE…QDAITLFGFG (63 aa)) are domain I. The segment at 64-142 (TLASKRMFLQ…LSQIEGSSAT (79 aa)) is domain II. The interval 143–145 (AST) is flexible linker. Positions 146–205 (PEDTGAEQVVEGLMSLGWHQQDAAHAVQTVCADNQIETPLNAKDVPRVLKLALTSLDRGR) are domain III.

It belongs to the RuvA family. Homotetramer. Forms an RuvA(8)-RuvB(12)-Holliday junction (HJ) complex. HJ DNA is sandwiched between 2 RuvA tetramers; dsDNA enters through RuvA and exits via RuvB. An RuvB hexamer assembles on each DNA strand where it exits the tetramer. Each RuvB hexamer is contacted by two RuvA subunits (via domain III) on 2 adjacent RuvB subunits; this complex drives branch migration. In the full resolvosome a probable DNA-RuvA(4)-RuvB(12)-RuvC(2) complex forms which resolves the HJ.

The protein resides in the cytoplasm. Its function is as follows. The RuvA-RuvB-RuvC complex processes Holliday junction (HJ) DNA during genetic recombination and DNA repair, while the RuvA-RuvB complex plays an important role in the rescue of blocked DNA replication forks via replication fork reversal (RFR). RuvA specifically binds to HJ cruciform DNA, conferring on it an open structure. The RuvB hexamer acts as an ATP-dependent pump, pulling dsDNA into and through the RuvAB complex. HJ branch migration allows RuvC to scan DNA until it finds its consensus sequence, where it cleaves and resolves the cruciform DNA. This chain is Holliday junction branch migration complex subunit RuvA, found in Bifidobacterium adolescentis (strain ATCC 15703 / DSM 20083 / NCTC 11814 / E194a).